A 751-amino-acid polypeptide reads, in one-letter code: Protein WEAK CHLOROPLAST MOVEMENT UNDER BLUE LIGHT-like 3 (751 aa).

Phosphoserine is present on Ser-113. Coiled coils occupy residues 165–558 (ERRK…ALQE) and 588–647 (QALE…KARD). Composition is skewed to basic and acidic residues over residues 455–467 (RERQ…KQKE) and 625–689 (NREM…RNKE). 2 disordered regions span residues 455-479 (RERQ…DKDA) and 625-751 (NREM…HSHK). Residues 704–723 (GSSSNNTGGSTTTNNNNLTP) show a composition bias toward low complexity.

The protein belongs to the WEB family.

This Arabidopsis thaliana (Mouse-ear cress) protein is Protein WEAK CHLOROPLAST MOVEMENT UNDER BLUE LIGHT-like 3 (WEL3).